The following is a 385-amino-acid chain: Transmembrane protein 271 (385 aa).

2 consecutive transmembrane segments (helical) span residues 9–29 (CAALSSCLLLACALSAAAVGL) and 50–70 (GAFYSGLLLAAGLSLLGAALL). The segment at 83–111 (EPGPGLGVPAAPAGAPEATPGESGAAAGA) is disordered. Residues 121–141 (LLLGVLVFMLGVLSAFAGAVI) form a helical membrane-spanning segment. Residues 160–203 (PRAPGSSPGSAPGSTPGSAPGSAPGSAPGSAPGAPRARSTLDSA) form a disordered region. Residues 163–197 (PGSSPGSAPGSTPGSAPGSAPGSAPGSAPGAPRAR) show a composition bias toward low complexity. A helical transmembrane segment spans residues 219 to 239 (VLSTVFNSLECLLGLLSLLLV). The interval 245 to 305 (SQARRGRRGR…SEASILSPEE (61 aa)) is disordered. A compositionally biased stretch (basic residues) spans 246-258 (QARRGRRGRRRGG). The segment covering 259-277 (RALARPRGGSGLRAQPPAS) has biased composition (low complexity). A compositionally biased stretch (basic residues) spans 278–292 (RARRGRRGRRGRRLQ).

Its subcellular location is the membrane. This is Transmembrane protein 271 from Homo sapiens (Human).